We begin with the raw amino-acid sequence, 623 residues long: Heterogeneous nuclear ribonucleoprotein Q (623 aa).

An N-acetylalanine modification is found at A2. S159 is subject to Phosphoserine. RRM domains are found at residues T162–A241, N243–P325, and K338–P408. K168 is covalently cross-linked (Glycyl lysine isopeptide (Lys-Gly) (interchain with G-Cter in SUMO2)). K221 carries the N6-acetyllysine modification. K363 carries the post-translational modification N6-acetyllysine. Position 373 is a phosphotyrosine (Y373). The tract at residues N400 to V561 is interaction with APOBEC1. Asymmetric dimethylarginine; by PRMT1; alternate is present on R444. R444 is subject to Omega-N-methylarginine; by PRMT1; alternate. 6 repeat units span residues R448–G450, R451–G453, Y460–E464, Y469–Y472, R478–G480, and Y485–Y488. Positions R448–G559 are 8 X 3 AA repeats of R-G-G. Residues Y460 to Y488 are 3 X 4 AA repeats of Y-Y-G-Y. R496 carries the omega-N-methylarginine; by PRMT1 modification. The tract at residues G497–K623 is disordered. A 1-4 repeat occupies R498 to G500. Residues R504 to G522 show a composition bias toward low complexity. Position 510 is an asymmetric dimethylarginine; by PRMT1 (R510). Asymmetric dimethylarginine; by PRMT1; alternate occurs at positions 518, 526, 536, and 539. Omega-N-methylarginine; by PRMT1; alternate is present on residues R518, R526, R536, and R539. Residues R518–G549 form an interaction with SMN region. A 1-5 repeat occupies R526–G528. 3 tandem repeats follow at residues R539–G541, R554–G556, and R557–G559. Gly residues predominate over residues V550 to G562. The Bipartite nuclear localization signal motif lies at K564–R578. The segment covering T580 to L595 has biased composition (polar residues). S587 is subject to Phosphoserine. A Glycyl lysine isopeptide (Lys-Gly) (interchain with G-Cter in SUMO2) cross-link involves residue K607. Residues Q611–K623 show a composition bias toward polar residues.

In terms of assembly, isoform 1 is a component of the APOB mRNA editosome complex and interacts with APOBEC1 and A1CF (APOBEC1 complementation factor). Part of a complex associated with the FOS mCRD domain and consisting of PABPC1, PAIP1, CSDE1/UNR, HNRPD and SYNCRIP. Isoform 3 interacts with HNRPR. Interacts with POLR2A hyperphosphorylated C-terminal domain. Isoform 1, isoform 2 and isoform 3 interact with SMN. Isoform 3 interacts through its C-terminal domain with SYT7, SYT8 and SYT9. The non-phosphorylated and phosphorylated forms are colocalized with PAIP1 in polysomes. Interacts with HABP4. Identified in a histone pre-mRNA complex, at least composed of ERI1, LSM11, SLBP, SNRPB, SYNCRIP and YBX1. Identified in the spliceosome C complex. Component of the coding region determinant (CRD)-mediated complex, composed of DHX9, HNRNPU, IGF2BP1, SYNCRIP and YBX1. Identified in a mRNP complex, at least composed of DHX9, DDX3X, ELAVL1, HNRNPU, IGF2BP1, ILF3, PABPC1, PCBP2, PTBP2, STAU1, STAU2, SYNCRIP and YBX1. Identified in a mRNP granule complex, at least composed of ACTB, ACTN4, DHX9, ERG, HNRNPA1, HNRNPA2B1, HNRNPAB, HNRNPD, HNRNPL, HNRNPR, HNRNPU, HSPA1, HSPA8, IGF2BP1, ILF2, ILF3, NCBP1, NCL, PABPC1, PABPC4, PABPN1, RPLP0, RPS3, RPS3A, RPS4X, RPS8, RPS9, SYNCRIP, YBX1 and untranslated mRNAs. Interacts with GTPBP1. Component of the GAIT complex; in humans the complex assembly seems to be a two-step process in which EPRS1 first associates with SYNCRIP to form a pre-GAIT complex which is deficient in GAIT element binding. (Microbial infection) Interacts with minute virus of mice (MVM) NS1 protein. As to quaternary structure, (Microbial infection) Interacts with herpes virus 8/HHV-8 protein vIRF-1; this interaction induces ubiquitination and degradation of SYNCRIP. Post-translationally, phosphorylated on tyrosine. The membrane-bound form found in microsomes is phosphorylated in vitro by insulin receptor tyrosine kinase (INSR). Phosphorylation is inhibited upon binding to RNA, whereas the cytoplasmic form is poorly phosphorylated. As to expression, ubiquitously expressed. Detected in heart, brain, pancreas, placenta, spleen, lung, liver, skeletal muscle, kidney, thymus, prostate, uterus, small intestine, colon, peripheral blood and testis.

The protein localises to the cytoplasm. It is found in the microsome. The protein resides in the endoplasmic reticulum. Its subcellular location is the nucleus. It localises to the nucleoplasm. Functionally, heterogenous nuclear ribonucleoprotein (hnRNP) implicated in mRNA processing mechanisms. Component of the CRD-mediated complex that promotes MYC mRNA stability. Isoform 1, isoform 2 and isoform 3 are associated in vitro with pre-mRNA, splicing intermediates and mature mRNA protein complexes. Isoform 1 binds to apoB mRNA AU-rich sequences. Isoform 1 is part of the APOB mRNA editosome complex and may modulate the postranscriptional C to U RNA-editing of the APOB mRNA through either by binding to A1CF (APOBEC1 complementation factor), to APOBEC1 or to RNA itself. May be involved in translationally coupled mRNA turnover. Implicated with other RNA-binding proteins in the cytoplasmic deadenylation/translational and decay interplay of the FOS mRNA mediated by the major coding-region determinant of instability (mCRD) domain. Interacts in vitro preferentially with poly(A) and poly(U) RNA sequences. Isoform 3 may be involved in cytoplasmic vesicle-based mRNA transport through interaction with synaptotagmins. Component of the GAIT (gamma interferon-activated inhibitor of translation) complex which mediates interferon-gamma-induced transcript-selective translation inhibition in inflammation processes. Upon interferon-gamma activation assembles into the GAIT complex which binds to stem loop-containing GAIT elements in the 3'-UTR of diverse inflammatory mRNAs (such as ceruplasmin) and suppresses their translation; seems not to be essential for GAIT complex function. This chain is Heterogeneous nuclear ribonucleoprotein Q (SYNCRIP), found in Homo sapiens (Human).